A 332-amino-acid chain; its full sequence is Ferrochelatase (332 aa).

Positions 201 and 283 each coordinate Fe cation.

This sequence belongs to the ferrochelatase family.

The protein resides in the cytoplasm. It catalyses the reaction heme b + 2 H(+) = protoporphyrin IX + Fe(2+). Its pathway is porphyrin-containing compound metabolism; protoheme biosynthesis; protoheme from protoporphyrin-IX: step 1/1. Functionally, catalyzes the ferrous insertion into protoporphyrin IX. The protein is Ferrochelatase of Francisella tularensis subsp. holarctica (strain FTNF002-00 / FTA).